The chain runs to 618 residues: MTQQYPLLDKINSPADLRRLPRTQLPELCAEIRQFLLTSVSQSSGHLASGLGTVELTVALHYVYHTPEDKLVWDVGHQAYPHKILTGRKQRLHSIRQKDGLHPFPWREESEYDVLSVGHSSTSISAALGMAVAAQRQSLRQKVVSIIGDGAMTAGMAFEAMNHAGDIKPDMLVVLNDNDMSISENVGALNHHFARLLSGRFYTSLREGSKKLLSPLPHIRHFASRAEEHMKGMMAPGTIFEELGFNYIGPIDGHDVDTLVDTLSNMRSLGGPQLLHIVTQKGKGYRPAERDPIGYHGVPKFDPKESSLPEKAPGIPSYSEIFGQWLCDTASNDKSLMAITPAMREGSGMVTFSQQYPQQYFDVAIAEQHSVTYAAGLAISGLKPVVAIYSTFLQRGYDQLIHDVALQNLDVLFAIDRAGIVGADGPTHQGAFDLSYLRCIPNMVVMAPSNEQECLDMLTTGYQYKGPAAVRYPRGAGVGLELRKGKVIDIGKAQTLTEGQNIAFLNFGTLLPEVEAAAAKFNATVVDMRFIKPLDTACLDQLMTTHSVLVTVEENVIAGGAGGAVSEYVAQHKASPQVLTIGLPDEFIKHGSQGEVRAELGLDAAGIERQVNDFIKKS.

Thiamine diphosphate-binding positions include His77 and Gly118–Ser120. Asp149 lines the Mg(2+) pocket. Residues Gly150 to Ala151, Asn178, Tyr285, and Glu367 contribute to the thiamine diphosphate site. A Mg(2+)-binding site is contributed by Asn178.

Belongs to the transketolase family. DXPS subfamily. Homodimer. Mg(2+) serves as cofactor. It depends on thiamine diphosphate as a cofactor.

It carries out the reaction D-glyceraldehyde 3-phosphate + pyruvate + H(+) = 1-deoxy-D-xylulose 5-phosphate + CO2. The protein operates within metabolic intermediate biosynthesis; 1-deoxy-D-xylulose 5-phosphate biosynthesis; 1-deoxy-D-xylulose 5-phosphate from D-glyceraldehyde 3-phosphate and pyruvate: step 1/1. Its function is as follows. Catalyzes the acyloin condensation reaction between C atoms 2 and 3 of pyruvate and glyceraldehyde 3-phosphate to yield 1-deoxy-D-xylulose-5-phosphate (DXP). The polypeptide is 1-deoxy-D-xylulose-5-phosphate synthase (Idiomarina loihiensis (strain ATCC BAA-735 / DSM 15497 / L2-TR)).